The sequence spans 233 residues: Defense protein 3 (233 aa).

The first 17 residues, 1-17 (MFGKFVLLAVLLVGVNS), serve as a signal peptide directing secretion. The propeptide occupies 18 to 45 (RYVIIEDPVYYIEDHELPEQWTSSRVRR).

Belongs to the attacin/sarcotoxin-2 family.

The protein resides in the secreted. Functionally, has antibacterial activity against both Gram-positive and Gram-negative bacteria. The chain is Defense protein 3 from Lonomia obliqua (Moth).